The chain runs to 718 residues: Polyribonucleotide nucleotidyltransferase (718 aa).

Mg(2+) is bound by residues D496 and D502. The 60-residue stretch at 563–622 folds into the KH domain; sequence PRLLTIKIDPDMIGLVIGPGGKTIKGITEETGAKIDIEDDGTVTISAVDENKAKRARNIV. Positions 632–700 constitute an S1 motif domain; it reads GDVYAGRVTR…NKGRINLTRL (69 aa).

In terms of assembly, may form homodimers or higher order multimers. Interacts with RNase E (rne). Mg(2+) serves as cofactor.

Its subcellular location is the cytoplasm. It catalyses the reaction RNA(n+1) + phosphate = RNA(n) + a ribonucleoside 5'-diphosphate. Involved in mRNA degradation. Catalyzes the phosphorolysis of single-stranded polyribonucleotides processively in the 3'- to 5'-direction. This is Polyribonucleotide nucleotidyltransferase from Nostoc sp. (strain PCC 7120 / SAG 25.82 / UTEX 2576).